The following is a 134-amino-acid chain: Lymphocyte antigen 6A-2/6E-1 (134 aa).

The first 26 residues, 1–26 (MDTSHTTKSCLLILLVALLCAERAQG), serve as a signal peptide directing secretion. The 93-residue stretch at 27 to 119 (LECYQCYGVP…NGGSTWTMAG (93 aa)) folds into the UPAR/Ly6 domain. Disulfide bonds link Cys29/Cys53, Cys32/Cys41, Cys46/Cys74, Cys78/Cys98, and Cys99/Cys104. A lipid anchor (GPI-anchor amidated glycine) is attached at Gly112. Positions 113-134 (STWTMAGVLLFSLSSVLLQTLL) are cleaved as a propeptide — removed in mature form.

In terms of processing, O-glycosylated. Not N-glycosylated. Not phosphorylated. As to expression, widely expressed.

It localises to the cell membrane. In terms of biological role, T-cell activation. This is Lymphocyte antigen 6A-2/6E-1 (Ly6a) from Mus musculus (Mouse).